The chain runs to 103 residues: Putative double-stranded DNA mimic protein HAPS_1002 (103 aa).

The protein belongs to the putative dsDNA mimic protein family.

In terms of biological role, may act as a double-stranded DNA (dsDNA) mimic. Probably regulates the activity of a dsDNA-binding protein. The sequence is that of Putative double-stranded DNA mimic protein HAPS_1002 from Glaesserella parasuis serovar 5 (strain SH0165) (Haemophilus parasuis).